Here is a 262-residue protein sequence, read N- to C-terminus: ClpXP adapter protein SpxH (262 aa).

Belongs to the SpxH family. As to quaternary structure, interacts with Spx.

It is found in the cytoplasm. Adapter protein required for efficient degradation of Spx by ClpXP under non-stress conditions. Interaction with Spx stabilizes Spx and exposes the C-terminus of Spx for recognition and proteolysis by ClpXP. The polypeptide is ClpXP adapter protein SpxH (Staphylococcus saprophyticus subsp. saprophyticus (strain ATCC 15305 / DSM 20229 / NCIMB 8711 / NCTC 7292 / S-41)).